We begin with the raw amino-acid sequence, 226 residues long: tRNA (guanine-N(1)-)-methyltransferase (226 aa).

Residues Gly112 and 132–137 contribute to the S-adenosyl-L-methionine site; that span reads IGDYVL.

It belongs to the RNA methyltransferase TrmD family. Homodimer.

It localises to the cytoplasm. The enzyme catalyses guanosine(37) in tRNA + S-adenosyl-L-methionine = N(1)-methylguanosine(37) in tRNA + S-adenosyl-L-homocysteine + H(+). Functionally, specifically methylates guanosine-37 in various tRNAs. In Flavobacterium johnsoniae (strain ATCC 17061 / DSM 2064 / JCM 8514 / BCRC 14874 / CCUG 350202 / NBRC 14942 / NCIMB 11054 / UW101) (Cytophaga johnsonae), this protein is tRNA (guanine-N(1)-)-methyltransferase.